The primary structure comprises 557 residues: CTP synthase (557 aa).

The interval 1-270 (MTKYVFVTGG…DAIICEELKL (270 aa)) is amidoligase domain. Ser-13 contributes to the CTP binding site. Ser-13 is a binding site for UTP. ATP-binding positions include 14–19 (SLGKGI) and Asp-71. Mg(2+) contacts are provided by Asp-71 and Glu-144. CTP is bound by residues 151–153 (DIE), 191–196 (KTKPTQ), and Lys-227. Residues 191–196 (KTKPTQ) and Lys-227 contribute to the UTP site. The 253-residue stretch at 295 to 547 (TIGMVGKYVD…VEAALAHHEA (253 aa)) folds into the Glutamine amidotransferase type-1 domain. Gly-356 lines the L-glutamine pocket. Residue Cys-383 is the Nucleophile; for glutamine hydrolysis of the active site. L-glutamine is bound by residues 384 to 387 (LGMQ), Glu-407, and Arg-473. Catalysis depends on residues His-520 and Glu-522.

Belongs to the CTP synthase family. In terms of assembly, homotetramer.

The catalysed reaction is UTP + L-glutamine + ATP + H2O = CTP + L-glutamate + ADP + phosphate + 2 H(+). It carries out the reaction L-glutamine + H2O = L-glutamate + NH4(+). It catalyses the reaction UTP + NH4(+) + ATP = CTP + ADP + phosphate + 2 H(+). Its pathway is pyrimidine metabolism; CTP biosynthesis via de novo pathway; CTP from UDP: step 2/2. Allosterically activated by GTP, when glutamine is the substrate; GTP has no effect on the reaction when ammonia is the substrate. The allosteric effector GTP functions by stabilizing the protein conformation that binds the tetrahedral intermediate(s) formed during glutamine hydrolysis. Inhibited by the product CTP, via allosteric rather than competitive inhibition. Functionally, catalyzes the ATP-dependent amination of UTP to CTP with either L-glutamine or ammonia as the source of nitrogen. Regulates intracellular CTP levels through interactions with the four ribonucleotide triphosphates. This Paraburkholderia phytofirmans (strain DSM 17436 / LMG 22146 / PsJN) (Burkholderia phytofirmans) protein is CTP synthase.